Consider the following 232-residue polypeptide: MPGWFKKVWYGLASLLSFSSFLLIIVALSLPHWLSGKILCQTGVDLVNATDPELVKFIGDIYYGLFRGCKVRQCGLGGRQSQFTIFPHLVKELNAGLHVTILLLLFLALALALVSMGFAILNIIQVPYRAVNGPGGICLWNVLAGGVVALAIGSFMAAVKFHDLTERIANFQERLFQFVVVEEQYEESFWICVASASAHAANLVVVAISQIPLPEIKTKMEEATVTPEDILY.

The next 4 helical transmembrane spans lie at 8 to 28 (VWYG…IVAL), 101 to 121 (ILLL…FAIL), 139 to 159 (LWNV…MAAV), and 188 to 208 (SFWI…VVAI).

It belongs to the clarin family. As to expression, detected in inner ear, particularly in hair bundles of auditory hair cells and is enriched in apical stereocilia. Detected in eye, but not in brain or muscle.

Its subcellular location is the cell projection. It localises to the stereocilium membrane. Functionally, plays a key role to hearing function. Required for normal organization and maintenance of the stereocilia bundle and for mechano-electrical transduction. The chain is Clarin-2 from Mus musculus (Mouse).